Consider the following 254-residue polypeptide: 5-oxoprolinase subunit A (254 aa).

Belongs to the LamB/PxpA family. Forms a complex composed of PxpA, PxpB and PxpC.

The enzyme catalyses 5-oxo-L-proline + ATP + 2 H2O = L-glutamate + ADP + phosphate + H(+). Functionally, catalyzes the cleavage of 5-oxoproline to form L-glutamate coupled to the hydrolysis of ATP to ADP and inorganic phosphate. The chain is 5-oxoprolinase subunit A from Gluconobacter oxydans (strain 621H) (Gluconobacter suboxydans).